A 188-amino-acid chain; its full sequence is Elongation factor P (188 aa).

Belongs to the elongation factor P family.

The protein resides in the cytoplasm. The protein operates within protein biosynthesis; polypeptide chain elongation. In terms of biological role, involved in peptide bond synthesis. Stimulates efficient translation and peptide-bond synthesis on native or reconstituted 70S ribosomes in vitro. Probably functions indirectly by altering the affinity of the ribosome for aminoacyl-tRNA, thus increasing their reactivity as acceptors for peptidyl transferase. This is Elongation factor P from Gemmatimonas aurantiaca (strain DSM 14586 / JCM 11422 / NBRC 100505 / T-27).